We begin with the raw amino-acid sequence, 302 residues long: Ectoine dioxygenase (302 aa).

An L-ectoine-binding site is contributed by Q128. A 2-oxoglutarate-binding site is contributed by K134. Residues H145, D147, and H246 each coordinate Fe cation.

Belongs to the PhyH family. EctD subfamily. As to quaternary structure, homodimer. Fe(2+) is required as a cofactor.

The enzyme catalyses L-ectoine + 2-oxoglutarate + O2 = 5-hydroxyectoine + succinate + CO2. Its function is as follows. Involved in the biosynthesis of 5-hydroxyectoine, called compatible solute, which helps organisms to survive extreme osmotic stress by acting as a highly soluble organic osmolyte. Catalyzes the 2-oxoglutarate-dependent selective hydroxylation of L-ectoine to yield (4S,5S)-5-hydroxyectoine. The protein is Ectoine dioxygenase of Stutzerimonas stutzeri (strain A1501) (Pseudomonas stutzeri).